The sequence spans 633 residues: MHGLLLAGLLALPMNVLAHPAEQQTSSVLSRRGVDIDSFRLPLKAKYMDSDATAQKIQALSFSKEDDYVSTATKLVKSTFPKSTFRVVDDHYIGTNGIGHVHFKQTAHGLDIDNSDFNVNIDRDGKVFSFGNSFFTGEIPKESPMVKREFSDPVKALKGAVKALNLPVKSENAKAKTVEGKESFEFQGTSGALSAPKAKLVYLQKEDGSLALTWKVETDVGDNWLLSYVDAHDSETVHNVVDYVASAEFKVFAWGLNDPTEGNPTSFRDPWTASSPFTWHSDGTNKYPTTRGNNAIAQDNPTGGSTYLNNYRPQSANLIFNYPWTAAMTPPSSYKDFSITQLFYTTNRYHDLLYSFGFNEAAGNFQVNNNNKGGKGNDFAIVNAQDGSGTNNANFATPPDGSPGRMRMYNWTTARPNRDGCLEAGIVIHEYTHGLSNRLCGGPANSACLNALESGGMGEGWGDFYATAIRLKPRDTKNTNYSMGAWAANDPKGIRAYLYSTNLQTNPYMYTSVNNLREVHGIGTVWATMLYELMWGLIEAHGGTYSADPVFRNGVPQDGRHLAMKIVMDGMALQPCNPNFVQARDAIIDADRALTNGANKCTIWKAFAKRGLGYGAKYDPRTRTGSNQLPPGC.

An N-terminal signal peptide occupies residues 1–18 (MHGLLLAGLLALPMNVLA). A propeptide spanning residues 19-246 (HPAEQQTSSV…VHNVVDYVAS (228 aa)) is cleaved from the precursor. The N-linked (GlcNAc...) asparagine glycan is linked to asparagine 410. Histidine 429 provides a ligand contact to Zn(2+). Residue glutamate 430 is part of the active site. Histidine 433 is a Zn(2+) binding site. Asparagine 480 is a glycosylation site (N-linked (GlcNAc...) asparagine).

The protein belongs to the peptidase M36 family. Zn(2+) serves as cofactor.

The protein localises to the secreted. Its function is as follows. Secreted metalloproteinase probably acting as a virulence factor. The polypeptide is Extracellular metalloproteinase 3 (MEP3) (Arthroderma otae (Microsporum canis)).